A 35-amino-acid polypeptide reads, in one-letter code: Pheromone-binding protein 1 (35 aa).

This sequence belongs to the PBP/GOBP family. As to quaternary structure, homodimer. In terms of tissue distribution, antenna.

In terms of biological role, this major soluble protein in olfactory sensilla of male moths might serve to solubilize the extremely hydrophobic pheromone molecules and to transport pheromone through the aqueous lymph to receptors located on olfactory cilia. The protein is Pheromone-binding protein 1 of Lymantria dispar (Gypsy moth).